Consider the following 124-residue polypeptide: Large ribosomal subunit protein bL12 (124 aa).

Belongs to the bacterial ribosomal protein bL12 family. Homodimer. Part of the ribosomal stalk of the 50S ribosomal subunit. Forms a multimeric L10(L12)X complex, where L10 forms an elongated spine to which 2 to 4 L12 dimers bind in a sequential fashion. Binds GTP-bound translation factors.

Its function is as follows. Forms part of the ribosomal stalk which helps the ribosome interact with GTP-bound translation factors. Is thus essential for accurate translation. The protein is Large ribosomal subunit protein bL12 of Jannaschia sp. (strain CCS1).